A 500-amino-acid chain; its full sequence is Protein ASPARTIC PROTEASE IN GUARD CELL 1 (500 aa).

Positions 1–24 are cleaved as a signal peptide; that stretch reads MAFPRFLSLLAVVTLSLFLTTTDA. A Peptidase A1 domain is found at 162 to 496; sequence YFSRIGVGTP…DLSKNVIGLS (335 aa). The active site involves Asp180. 6 cysteine pairs are disulfide-bonded: Cys190/Cys193, Cys196/Cys271, Cys217/Cys235, Cys222/Cys230, Cys307/Cys500, and Cys419/Cys461. Asp379 is an active-site residue.

The protein belongs to the peptidase A1 family. As to expression, expressed in young seedlings, leaves, guard-cells, stems, flowers and siliques, but not in roots or mesophyll cells.

The protein resides in the endoplasmic reticulum. Its activity is regulated as follows. Inhibited by pepstatin A. Aspartic protease involved in drought avoidance through abscisic acid signaling. This chain is Protein ASPARTIC PROTEASE IN GUARD CELL 1 (ASPG1), found in Arabidopsis thaliana (Mouse-ear cress).